The following is a 722-amino-acid chain: Tudor domain-containing protein 3 (722 aa).

Residues 264–304 (LVDEKALRHITEMGFSKEASRQALMDNGNNLEAALNVLLNS) enclose the UBA domain. Disordered regions lie at residues 305-342 (NKQK…SAPS), 355-453 (LSVE…RSYS), and 470-526 (SDTV…HFYD). Position 327 is a phosphoserine (Ser-327). A compositionally biased stretch (polar residues) spans 362–388 (SQPQQLHQGQNRVSNTEQNGVKDNNQP). 2 stretches are compositionally biased toward basic and acidic residues: residues 392–409 (PRND…RFQR) and 442–453 (AEERTKCDRSYS). A Glycyl lysine isopeptide (Lys-Gly) (interchain with G-Cter in SUMO2) cross-link involves residue Lys-541. Residues 626-686 (LWKSGDECLA…RPIQSEAWEE (61 aa)) enclose the Tudor domain. The span at 695–704 (EFRRGGDGQP) shows a compositional bias: basic and acidic residues. The interval 695–722 (EFRRGGDGQPRRSTRPTQQFYQPPRARN) is disordered. The EBM motif; may mediate interaction with the EJC stretch occupies residues 702-722 (GQPRRSTRPTQQFYQPPRARN).

As to quaternary structure, component of mRNA stress granules. Interacts with FMR1, FXR1, FXR2, EWSR1, FUS, SERBP1, EEF1A1 and DDX3X or DDX3Y, and with the small nuclear ribonucleoprotein-associated proteins SNRPB and SNRPN. Interacts with 'Lys-48'-linked tetra-ubiquitin, but not with monoubiquitin or 'Lys-63'-linked ubiquitin chains. May interact with the exon junction complex (EJC) composed at least of CASC3, EIF4A3, MAGOH and RBM8A. Interacts with POLR2A (via the C-terminal domain (CTD)).

It localises to the cytoplasm. It is found in the nucleus. In terms of biological role, scaffolding protein that specifically recognizes and binds dimethylarginine-containing proteins. Plays a role in the regulation of translation of target mRNAs by binding Arg/Gly-rich motifs (GAR) in dimethylarginine-containing proteins. In nucleus, acts as a coactivator: recognizes and binds asymmetric dimethylation on the core histone tails associated with transcriptional activation (H3R17me2a and H4R3me2a) and recruits proteins at these arginine-methylated loci. In cytoplasm, acts as an antiviral factor that participates in the assembly of stress granules together with G3BP1. This Bos taurus (Bovine) protein is Tudor domain-containing protein 3 (TDRD3).